The chain runs to 169 residues: MICLVLTIFANLFPSAYSGVNERTFLAVKPDGVQRRLVGEIVRRFERKGFKLVALKLVQASEELLREHYVELREKPFYSRLVKYMSSGPVVAMVWQGLDVVHASRALIGATDPGDAMPGTIRGDFCMEVGKNVIHGSDSVESAHREIALWFREAELLCWEDSAGHWLYE.

ADP contacts are provided by Lys29, Arg105, Thr111, Arg122, Val129, and Asn132. His135 acts as the Pros-phosphohistidine intermediate in catalysis.

Belongs to the NDK family. As to quaternary structure, homohexamer. Interacts (via its N-terminal region) with KAT5; this interaction enables recruitment of NME3 at DNA damage sites where it plays a role in the repair of DNA. Found in association with several ciliary nephronophthisis proteins, including NEK8, CEP164, ANKS6. The cofactor is Mg(2+).

The protein resides in the mitochondrion outer membrane. It is found in the cytoplasm. Its subcellular location is the cytoskeleton. The protein localises to the cilium basal body. The enzyme catalyses a 2'-deoxyribonucleoside 5'-diphosphate + ATP = a 2'-deoxyribonucleoside 5'-triphosphate + ADP. It carries out the reaction a ribonucleoside 5'-diphosphate + ATP = a ribonucleoside 5'-triphosphate + ADP. Catalyzes the phosphorylation of ribonucleosides and deoxyribonucleoside diphosphates, other than ATP, into the corresponding triphosphates with ATP as the major phosphate donor. The ATP gamma phosphate is transferred to the nucleoside diphosphate beta phosphate via a ping-pong mechanism, using a phosphorylated active-site intermediate. Through the catalyzed exchange of gamma-phosphate between di- and triphosphonucleosides participates in regulation of intracellular nucleotide homeostasis. Inhibits granulocyte differentiation. May be required for ciliary function during renal development. Its function is as follows. Independently of its kinase activity, facilitates mitochondrial tethering prior to membrane fusion through its direct membrane-binding and hexamerization. Implicated in repair of both single- and double-stranded breaks in DNA through its association with the ribonucleotide reductase complex (RNR complex) via its interaction with the histone acetyltransferase KAT5, this interaction enables recruitment of NME3 at DNA damage sites where it plays a role in the repair of DNA, independently of its kinase activity. The chain is Nucleoside diphosphate kinase 3 (Nme3) from Mus musculus (Mouse).